Reading from the N-terminus, the 201-residue chain is MELTITGSGKGISVSDAAFAKDFNEALVHQVVTAYMAAGRQGTKAQKTRSEVSGGGKKPWRQKGTGRARAGTIRSPIWRSGGVTFAAKPRDFEQKVNRKMYRAAMRSIFSELVRQERLVVVDDMNVDTPKTKAFTAKLSDLGVSNALILSENVEQNLHLASRNVPHVDVRDVAGLDPVSLVAFEKVVVTVPALKKIEEMLG.

The interval 39–70 (GRQGTKAQKTRSEVSGGGKKPWRQKGTGRARA) is disordered.

This sequence belongs to the universal ribosomal protein uL4 family. As to quaternary structure, part of the 50S ribosomal subunit.

Functionally, one of the primary rRNA binding proteins, this protein initially binds near the 5'-end of the 23S rRNA. It is important during the early stages of 50S assembly. It makes multiple contacts with different domains of the 23S rRNA in the assembled 50S subunit and ribosome. In terms of biological role, forms part of the polypeptide exit tunnel. The protein is Large ribosomal subunit protein uL4 of Marinobacter nauticus (strain ATCC 700491 / DSM 11845 / VT8) (Marinobacter aquaeolei).